A 385-amino-acid polypeptide reads, in one-letter code: Probable threonine protease PRSS50 (385 aa).

The signal sequence occupies residues 1 to 39; that stretch reads MGRWCQTVARGQRPRTSAPSRAGALLLLLLLLRSAGCWG. Residues 93–358 form the Peptidase S1 domain; that stretch reads VSEGKVDPYR…YQHWIWDCLN (266 aa). Asn133 carries N-linked (GlcNAc...) asparagine glycosylation. Cys138 and Cys154 are joined by a disulfide. Catalysis depends on charge relay system residues His153 and Asp206. 3 cysteine pairs are disulfide-bonded: Cys240–Cys316, Cys273–Cys296, and Cys306–Cys334. A glycan (N-linked (GlcNAc...) asparagine) is linked at Asn279. Thr310 acts as the Charge relay system in catalysis.

Belongs to the peptidase S1 family. In terms of tissue distribution, testis specific. Differentially expressed in some breast cancer tissues.

It is found in the endoplasmic reticulum. In terms of biological role, may be involved in proteolysis through its threonine endopeptidase activity. This is Probable threonine protease PRSS50 (PRSS50) from Homo sapiens (Human).